Consider the following 229-residue polypeptide: 1-Cys peroxiredoxin PER1 (229 aa).

The Thioredoxin domain maps to 4 to 173 (LTIGDTVPNL…VLRAVDSLLT (170 aa)). Catalysis depends on Cys46, which acts as the Cysteine sulfenic acid (-SOH) intermediate. The Bipartite nuclear localization signal motif lies at 205–228 (RKMFPQGFETADLPSKKGYLRFTK).

It belongs to the peroxiredoxin family. Prx6 subfamily.

It is found in the nucleus. Its subcellular location is the cytoplasm. It catalyses the reaction a hydroperoxide + [thioredoxin]-dithiol = an alcohol + [thioredoxin]-disulfide + H2O. Its function is as follows. Thiol-specific peroxidase that catalyzes the reduction of hydrogen peroxide and organic hydroperoxides to water and alcohols, respectively. Seems to contribute to the inhibition of germination during stress. In Zea mays (Maize), this protein is 1-Cys peroxiredoxin PER1 (PER1).